The following is a 249-amino-acid chain: MFFSAALRARAAGLTAHWGRHVRNLHKTAKQNGAGGALFVHRDTPENNPDTPFDFTPENYKRIEAIVKNYPEGHKAAAVLPVLDLAQRQNGWLPISAMNKVAEVLQVPPMRVYEVATFYTMYNRKPVGKYHIQVCTTTPCMLRNSDSILEAIQKKLGIKVGETTPDKLFTLIEVECLGACVNAPMVQINDNYYEDLTAKDIEEIIDELKAGKIPKPGPRSGRFSCEPAGGLTSLTEPPKGPGFGVQAGL.

A mitochondrion-targeting transit peptide spans 1–32 (MFFSAALRARAAGLTAHWGRHVRNLHKTAKQN). Residue Lys-61 is modified to N6-acetyllysine. Residues Cys-135, Cys-140, Cys-176, and Cys-180 each contribute to the [2Fe-2S] cluster site. Residue Tyr-193 is modified to Phosphotyrosine; by SRC. Residues 213–249 (IPKPGPRSGRFSCEPAGGLTSLTEPPKGPGFGVQAGL) form a disordered region.

It belongs to the complex I 24 kDa subunit family. Core subunit of respiratory chain NADH dehydrogenase (Complex I) which is composed of 45 different subunits. This is a component of the flavoprotein-sulfur (FP) fragment of the enzyme. It depends on [2Fe-2S] cluster as a cofactor.

Its subcellular location is the mitochondrion inner membrane. It carries out the reaction a ubiquinone + NADH + 5 H(+)(in) = a ubiquinol + NAD(+) + 4 H(+)(out). Functionally, core subunit of the mitochondrial membrane respiratory chain NADH dehydrogenase (Complex I) which catalyzes electron transfer from NADH through the respiratory chain, using ubiquinone as an electron acceptor. Parts of the peripheral arm of the enzyme, where the electrons from NADH are accepted by flavin mononucleotide (FMN) and then passed along a chain of iron-sulfur clusters by electron tunnelling to the final acceptor ubiquinone. Contains one iron-sulfur cluster. The polypeptide is NADH dehydrogenase [ubiquinone] flavoprotein 2, mitochondrial (Pan troglodytes (Chimpanzee)).